The primary structure comprises 747 residues: DNA repair and recombination protein RAD54-like (747 aa).

Positions 1–41 (MRRSLAPSQLAKRKPEGRSCDDEDWQPGLVTPRKRKSSSET) are disordered. The tract at residues 2–9 (RRSLAPSQ) is required for chromatin remodeling, strand pairing activities and coupling of ATPase activity. Ser-38 is modified (phosphoserine). The Helicase ATP-binding domain maps to 170–345 (SRRIPGSHGC…FSLVHFVNSG (176 aa)). Residue 183-190 (DEMGLGKT) participates in ATP binding. A DEGH box motif is present at residues 296–299 (DEGH). The 154-residue stretch at 500-653 (VLDYILAVTR…CVVDEEQDVE (154 aa)) folds into the Helicase C-terminal domain. N6-acetyllysine is present on Lys-515. Phosphoserine; by NEK1 is present on Ser-572.

Belongs to the SNF2/RAD54 helicase family. In terms of assembly, homohexamer. Interacts (via N-terminus) with RAD51. Interacts with NAP1L1. Interacts with BRD9; this interaction orchestrates RAD51-RAD54 complex formation. In terms of processing, acetylated. Acetylation promotes interaction with BRD9, and subsequently with RAD54, which is essential for homologous recombination (HR). Phosphorylated. Phosphorylation at Ser-572 by NEK1 specifically in G2 phase allows efficient removal of RAD51 filaments from DNA.

It is found in the nucleus. It carries out the reaction ATP + H2O = ADP + phosphate + H(+). Functionally, plays an essential role in homologous recombination (HR) which is a major pathway for repairing DNA double-strand breaks (DSBs), single-stranded DNA (ssDNA) gaps, and stalled or collapsed replication forks. Acts as a molecular motor during the homology search and guides RAD51 ssDNA along a donor dsDNA thereby changing the homology search from the diffusion-based mechanism to a motor-guided mechanism. Also plays an essential role in RAD51-mediated synaptic complex formation which consists of three strands encased in a protein filament formed once homology is recognized. Once DNA strand exchange occured, dissociates RAD51 from nucleoprotein filaments formed on dsDNA. In Homo sapiens (Human), this protein is DNA repair and recombination protein RAD54-like (RAD54L).